A 252-amino-acid polypeptide reads, in one-letter code: MSQILLQPANAMITLENVNKWYGQFHVLKNINLTVQPGERIVLCGPSGSGKSTTIRCINHLEEHQQGRIVVDGIELNEDIRNIERVRQEVGMVFQHFNLFPHLTVLQNCTLAPIWVRKMPKKEAEDLAVHYLERVRIAEHAHKFPGQISGGQQQRVAIARSLCMKPKIMLFDEPTSALDPEMVKEVLDTMIGLAQSGMTMLCVTHEMGFARTVADRVIFMDRGEIVEQAAPDEFFAHPKSERTRAFLSQVIH.

Residues 13–247 (ITLENVNKWY…PKSERTRAFL (235 aa)) enclose the ABC transporter domain. 45–52 (GPSGSGKS) contacts ATP.

This sequence belongs to the ABC transporter superfamily.

The protein localises to the cell inner membrane. Probably part of a binding-protein-dependent transport system YdhWXYZ for an amino acid. Probably responsible for energy coupling to the transport system. This is an uncharacterized protein from Escherichia coli (strain K12).